Here is a 227-residue protein sequence, read N- to C-terminus: Cytochrome c oxidase subunit 2 (227 aa).

Topologically, residues 1–14 are mitochondrial intermembrane; that stretch reads MAYPMQLGLQDATS. The helical transmembrane segment at 15–45 threads the bilayer; the sequence is PIMEELTDFHDHTLMIVFLISTLVLYIISLM. Residues 46 to 59 lie on the Mitochondrial matrix side of the membrane; sequence LTTKLTHTNTMDAQ. Residues 60 to 87 form a helical membrane-spanning segment; sequence EVETVWTILPAIILIMIALPSLRILYMM. Residues 88–227 lie on the Mitochondrial intermembrane side of the membrane; sequence DEINDPYLTV…QFESWTSSMT (140 aa). The Cu cation site is built by H161, C196, E198, C200, H204, and M207. E198 contributes to the Mg(2+) binding site.

This sequence belongs to the cytochrome c oxidase subunit 2 family. In terms of assembly, component of the cytochrome c oxidase (complex IV, CIV), a multisubunit enzyme composed of 14 subunits. The complex is composed of a catalytic core of 3 subunits MT-CO1, MT-CO2 and MT-CO3, encoded in the mitochondrial DNA, and 11 supernumerary subunits COX4I, COX5A, COX5B, COX6A, COX6B, COX6C, COX7A, COX7B, COX7C, COX8 and NDUFA4, which are encoded in the nuclear genome. The complex exists as a monomer or a dimer and forms supercomplexes (SCs) in the inner mitochondrial membrane with NADH-ubiquinone oxidoreductase (complex I, CI) and ubiquinol-cytochrome c oxidoreductase (cytochrome b-c1 complex, complex III, CIII), resulting in different assemblies (supercomplex SCI(1)III(2)IV(1) and megacomplex MCI(2)III(2)IV(2)). Found in a complex with TMEM177, COA6, COX18, COX20, SCO1 and SCO2. Interacts with TMEM177 in a COX20-dependent manner. Interacts with COX20. Interacts with COX16. Cu cation is required as a cofactor.

The protein localises to the mitochondrion inner membrane. It carries out the reaction 4 Fe(II)-[cytochrome c] + O2 + 8 H(+)(in) = 4 Fe(III)-[cytochrome c] + 2 H2O + 4 H(+)(out). Component of the cytochrome c oxidase, the last enzyme in the mitochondrial electron transport chain which drives oxidative phosphorylation. The respiratory chain contains 3 multisubunit complexes succinate dehydrogenase (complex II, CII), ubiquinol-cytochrome c oxidoreductase (cytochrome b-c1 complex, complex III, CIII) and cytochrome c oxidase (complex IV, CIV), that cooperate to transfer electrons derived from NADH and succinate to molecular oxygen, creating an electrochemical gradient over the inner membrane that drives transmembrane transport and the ATP synthase. Cytochrome c oxidase is the component of the respiratory chain that catalyzes the reduction of oxygen to water. Electrons originating from reduced cytochrome c in the intermembrane space (IMS) are transferred via the dinuclear copper A center (CU(A)) of subunit 2 and heme A of subunit 1 to the active site in subunit 1, a binuclear center (BNC) formed by heme A3 and copper B (CU(B)). The BNC reduces molecular oxygen to 2 water molecules using 4 electrons from cytochrome c in the IMS and 4 protons from the mitochondrial matrix. This Cratogeomys castanops (Yellow-faced pocket gopher) protein is Cytochrome c oxidase subunit 2 (MT-CO2).